We begin with the raw amino-acid sequence, 152 residues long: Ribonuclease HI (152 aa).

An RNase H type-1 domain is found at methionine 1–glutamate 142. Residues aspartate 10, glutamate 48, aspartate 70, and aspartate 134 each coordinate Mg(2+).

This sequence belongs to the RNase H family. As to quaternary structure, monomer. Mg(2+) serves as cofactor.

The protein localises to the cytoplasm. It catalyses the reaction Endonucleolytic cleavage to 5'-phosphomonoester.. Its function is as follows. Endonuclease that specifically degrades the RNA of RNA-DNA hybrids. This Rickettsia conorii (strain ATCC VR-613 / Malish 7) protein is Ribonuclease HI.